The primary structure comprises 231 residues: L-ribulose-5-phosphate 4-epimerase AraD (231 aa).

Residues 27 to 28 (GN), 44 to 45 (SG), and 74 to 75 (SS) contribute to the substrate site. Residues D76, H95, and H97 each coordinate Zn(2+). The active-site Proton donor/acceptor is D120. Zn(2+) is bound at residue H171. The active-site Proton donor/acceptor is Y229.

Belongs to the aldolase class II family. AraD/FucA subfamily. In terms of assembly, homotetramer. Zn(2+) serves as cofactor.

It catalyses the reaction L-ribulose 5-phosphate = D-xylulose 5-phosphate. It functions in the pathway carbohydrate degradation; L-arabinose degradation via L-ribulose; D-xylulose 5-phosphate from L-arabinose (bacterial route): step 3/3. Its activity is regulated as follows. Inhibited by glycolohydroxamate at concentration above 0.1 mM. Its function is as follows. Involved in the degradation of L-arabinose. Catalyzes the interconversion of L-ribulose 5-phosphate (LRu5P) and D-xylulose 5-phosphate (D-Xu5P) via a retroaldol/aldol mechanism (carbon-carbon bond cleavage analogous to a class II aldolase reaction). This is L-ribulose-5-phosphate 4-epimerase AraD from Escherichia coli (strain K12).